We begin with the raw amino-acid sequence, 283 residues long: Diphthine methyl ester synthase (283 aa).

Residues L9, D84, G87, 112 to 113 (SI), L163, M221, and H246 each bind S-adenosyl-L-methionine.

Belongs to the diphthine synthase family.

The protein resides in the cytoplasm. It carries out the reaction 2-[(3S)-amino-3-carboxypropyl]-L-histidyl-[translation elongation factor 2] + 4 S-adenosyl-L-methionine = diphthine methyl ester-[translation elongation factor 2] + 4 S-adenosyl-L-homocysteine + 3 H(+). Its pathway is protein modification; peptidyl-diphthamide biosynthesis. Functionally, S-adenosyl-L-methionine-dependent methyltransferase that catalyzes four methylations of the modified target histidine residue in translation elongation factor 2 (EF-2), to form an intermediate called diphthine methyl ester. The four successive methylation reactions represent the second step of diphthamide biosynthesis. The polypeptide is Diphthine methyl ester synthase (dph5) (Schizosaccharomyces pombe (strain 972 / ATCC 24843) (Fission yeast)).